The primary structure comprises 504 residues: Maturase K (504 aa).

Belongs to the intron maturase 2 family. MatK subfamily.

It is found in the plastid. The protein localises to the chloroplast. Functionally, usually encoded in the trnK tRNA gene intron. Probably assists in splicing its own and other chloroplast group II introns. This chain is Maturase K, found in Cynophalla hastata (Broadleaf caper).